The chain runs to 338 residues: Malate dehydrogenase, mitochondrial (338 aa).

A mitochondrion-targeting transit peptide spans M1–N24. NAD(+) is bound by residues G31–G37 and D57. O-linked (GlcNAc) serine glycosylation occurs at S33. N6-acetyllysine; alternate occurs at positions 78 and 91. N6-succinyllysine; alternate occurs at positions 78 and 91. R104 and R110 together coordinate substrate. Residues N117 and I140–N142 contribute to the NAD(+) site. N142 lines the substrate pocket. K165 carries the post-translational modification N6-acetyllysine. Substrate is bound at residue R176. K185 bears the N6-acetyllysine; alternate mark. K185 carries the N6-succinyllysine; alternate modification. Catalysis depends on H200, which acts as the Proton acceptor. Position 203 is an N6-succinyllysine (K203). Residues K215 and K239 each carry the N6-acetyllysine; alternate modification. N6-succinyllysine; alternate is present on residues K215 and K239. K239 carries the N6-malonyllysine; alternate modification. The residue at position 246 (S246) is a Phosphoserine. M251 lines the NAD(+) pocket. K269 is subject to N6-succinyllysine. N6-acetyllysine; alternate occurs at positions 296, 301, and 307. N6-succinyllysine; alternate is present on residues K296, K301, and K307. The residue at position 307 (K307) is an N6-malonyllysine; alternate. T309 carries the post-translational modification Phosphothreonine. N6-acetyllysine; alternate occurs at positions 314 and 324. N6-succinyllysine; alternate occurs at positions 314 and 324. S326 carries the phosphoserine modification. N6-acetyllysine; alternate is present on residues K328, K329, and K335. K328 carries the N6-succinyllysine; alternate modification. K329 carries the N6-malonyllysine; alternate modification. An N6-succinyllysine; alternate modification is found at K335.

Belongs to the LDH/MDH superfamily. MDH type 1 family. In terms of assembly, homodimer. Post-translationally, acetylation is enhanced after treatment either with trichostin A (TCA) or with nicotinamide (NAM) with the appearance of tri- and tetraacetylations. Glucose also increases acetylation. Acetylation of Lys-239 and Lys-314 is observed in liver mitochondria from fasted mice but not from fed mice.

Its subcellular location is the mitochondrion matrix. The enzyme catalyses (S)-malate + NAD(+) = oxaloacetate + NADH + H(+). Enzyme activity is enhanced by acetylation. In Mus musculus (Mouse), this protein is Malate dehydrogenase, mitochondrial (Mdh2).